The primary structure comprises 545 residues: Chaperonin GroEL (545 aa).

ATP-binding positions include 30 to 33 (TLGP), Lys-51, 87 to 91 (DGTTT), Gly-415, 479 to 481 (NAA), and Asp-495.

It belongs to the chaperonin (HSP60) family. Forms a cylinder of 14 subunits composed of two heptameric rings stacked back-to-back. Interacts with the co-chaperonin GroES.

The protein localises to the cytoplasm. The catalysed reaction is ATP + H2O + a folded polypeptide = ADP + phosphate + an unfolded polypeptide.. Functionally, together with its co-chaperonin GroES, plays an essential role in assisting protein folding. The GroEL-GroES system forms a nano-cage that allows encapsulation of the non-native substrate proteins and provides a physical environment optimized to promote and accelerate protein folding. The sequence is that of Chaperonin GroEL from Cellvibrio japonicus (strain Ueda107) (Pseudomonas fluorescens subsp. cellulosa).